The chain runs to 740 residues: MAFFSPWKLSSQKLGFFLVTFGFIWGMMLLHFTIQQRTQPESSSMLREQILDLSKRYIKALAEENRDVVDGPYAGVMTAYDLKKTLAVLLDNILQRIGKLESKVDNLVNGTGANSTNSTTAVPSLVSLEKINVADIINGVQEKCVLPPMDGYPHCEGKIKWMKDMWRSDPCYADYGVDGTSCSFFIYLSEVENWCPRLPWRAKNPYEEADHNSLAEIRTDFNILYGMMKKHEEFRWMRLRIRRMADAWIQAIKSLAEKQNLEKRKRKKILVHLGLLTKESGFKIAETAFSGGPLGELVQWSDLITSLYLLGHDIRISASLAELKEIMKKVVGNRSGCPTVGDRIVELIYIDIVGLAQFKKTLGPSWVHYQCMLRVLDSFGTEPEFNHASYAQSKGHKTPWGKWNLNPQQFYTMFPHTPDNSFLGFVVEQHLNSSDIHHINEIKRQNQSLVYGKVDSFWKNKKIYLDIIHTYMEVHATVYGSSTKNIPSYVKNHGILSGRDLQFLLRETKLFVGLGFPYEGPAPLEAIANGCAFLNPKFNPPKSSKNTDFFIGKPTLRELTSQHPYAEVFIGRPHVWTVDLNNREEVEDAVKAILNQKIEPYMPYEFTCEGMLQRINAFIEKQDFCHGQVMWPPLSALQVKLAEPGQSCKQVCQESQLICEPSFFQHLNKEKDLLKYKVTCQSSELYKDILVPSFYPKSKHCVFQGDLLLFSCAGAHPTHQRICPCRDFIKGQVALCKDCL.

Over 1 to 13 (MAFFSPWKLSSQK) the chain is Cytoplasmic. A helical; Signal-anchor for type II membrane protein transmembrane segment spans residues 14–30 (LGFFLVTFGFIWGMMLL). Residues 31–740 (HFTIQQRTQP…GQVALCKDCL (710 aa)) are Lumenal-facing. N109, N114, and N117 each carry an N-linked (GlcNAc...) asparagine glycan. 9 cysteine pairs are disulfide-bonded: C144/C182, C155/C195, C171/C337, C371/C625, C648/C723, C652/C725, C659/C712, C680/C701, and C736/C739. The sufficient for catalytic activity stretch occupies residues 212–740 (NSLAEIRTDF…GQVALCKDCL (529 aa)). N-linked (GlcNAc...) asparagine glycosylation is present at N333. 377-378 (DS) is a binding site for substrate. N-linked (GlcNAc...) asparagine glycans are attached at residues N432 and N446. E525 is a UDP-N-acetyl-alpha-D-glucosamine binding site. K553 lines the substrate pocket.

It belongs to the glycosyltransferase 18 family. N-glycosylated. In terms of processing, a secreted form is released from the membrane after cleavage by gamma-secretase. Detected in cerebellum.

The protein resides in the golgi apparatus membrane. It is found in the perikaryon. Its subcellular location is the secreted. It catalyses the reaction N(4)-{beta-D-GlcNAc-(1-&gt;2)-[beta-D-GlcNAc-(1-&gt;4)]-alpha-D-Man-(1-&gt;3)-[beta-D-GlcNAc-(1-&gt;2)-alpha-D-Man-(1-&gt;6)]-beta-D-Man-(1-&gt;4)-beta-D-GlcNAc-(1-&gt;4)-beta-D-GlcNAc}-L-asparaginyl-[protein] + UDP-N-acetyl-alpha-D-glucosamine = N(4)-{beta-D-GlcNAc-(1-&gt;2)-[beta-D-GlcNAc-(1-&gt;4)]-alpha-D-Man-(1-&gt;3)-[beta-D-GlcNAc-(1-&gt;2)-[beta-D-GlcNAc-(1-&gt;6)]-alpha-D-Man-(1-&gt;6)]-beta-D-Man-(1-&gt;4)-beta-D-GlcNAc-(1-&gt;4)-beta-D-GlcNAc}-L-asparaginyl-[protein] + UDP + H(+). The protein operates within protein modification; protein glycosylation. Functionally, catalyzes the addition of N-acetylglucosamine (GlcNAc) in beta 1-6 linkage to the alpha-linked mannose of biantennary N-linked oligosaccharides. Catalyzes an important step in the biosynthesis of branched, complex-type N-glycans, such as those found on EGFR, TGFR (TGF-beta receptor) and CDH2. Via its role in the biosynthesis of complex N-glycans, plays an important role in the activation of cellular signaling pathways, reorganization of the actin cytoskeleton, cell-cell adhesion and cell migration. MGAT5-dependent EGFR N-glycosylation enhances the interaction between EGFR and LGALS3 and thereby prevents rapid EGFR endocytosis and prolongs EGFR signaling. Required for efficient interaction between TGFB1 and its receptor. Enhances activation of intracellular signaling pathways by several types of growth factors, including FGF2, PDGF, IGF, TGFB1 and EGF. MGAT5-dependent CDH2 N-glycosylation inhibits CDH2-mediated homotypic cell-cell adhesion and contributes to the regulation of downstream signaling pathways. Promotes cell migration. Contributes to the regulation of the inflammatory response. MGAT5-dependent TCR N-glycosylation enhances the interaction between TCR and LGALS3, limits agonist-induced TCR clustering, and thereby dampens TCR-mediated responses to antigens. Required for normal leukocyte evasation and accumulation at sites of inflammation. Inhibits attachment of monocytes to the vascular endothelium and subsequent monocyte diapedesis. Promotes proliferation of umbilical vein endothelial cells and angiogenesis, at least in part by promoting the release of the growth factor FGF2 from the extracellular matrix. In Mus musculus (Mouse), this protein is Alpha-1,6-mannosylglycoprotein 6-beta-N-acetylglucosaminyltransferase A (Mgat5).